We begin with the raw amino-acid sequence, 495 residues long: Ectonucleoside triphosphate diphosphohydrolase 8 (495 aa).

Residues 1 to 8 (MGLSRKEQ) are Cytoplasmic-facing. A helical membrane pass occupies residues 9-29 (VFLALLGASGVSGLTALILLL). Over 30–471 (VEATSVLLPT…AESYGVWVAK (442 aa)) the chain is Extracellular. An N-linked (GlcNAc...) asparagine glycan is attached at N67. Cysteines 78 and 102 form a disulfide. Residue E168 is the Proton acceptor of the active site. Cysteines 246 and 292 form a disulfide. Residue N304 is glycosylated (N-linked (GlcNAc...) asparagine). A disulfide bond links C329 and C335. An N-linked (GlcNAc...) asparagine glycan is attached at N363. The cysteines at positions 381 and 403 are disulfide-linked. A helical transmembrane segment spans residues 472–492 (VVFMVLALVAVVGAALVQLFW). Residues 493 to 495 (LQD) are Cytoplasmic-facing.

This sequence belongs to the GDA1/CD39 NTPase family. Ca(2+) is required as a cofactor. The cofactor is Mg(2+). Post-translationally, N-glycosylated.

The protein localises to the cell membrane. It catalyses the reaction a ribonucleoside 5'-triphosphate + 2 H2O = a ribonucleoside 5'-phosphate + 2 phosphate + 2 H(+). Its activity is regulated as follows. Not inhibited by ARL 67156. In terms of biological role, canalicular ectonucleoside NTPDase responsible for the main hepatic NTPDase activity. Ectonucleoside NTPDases catalyze the hydrolysis of gamma- and beta-phosphate residues of nucleotides, playing a central role in concentration of extracellular nucleotides. Has activity toward ATP, ADP, UTP and UDP, but not toward AMP. This chain is Ectonucleoside triphosphate diphosphohydrolase 8 (ENTPD8), found in Homo sapiens (Human).